An 88-amino-acid polypeptide reads, in one-letter code: Small ribosomal subunit protein bS20 (88 aa).

Residues 1 to 27 are disordered; that stretch reads MANSKSAKKRALQSEKRRQHNASRRSM.

Belongs to the bacterial ribosomal protein bS20 family.

Its function is as follows. Binds directly to 16S ribosomal RNA. The polypeptide is Small ribosomal subunit protein bS20 (Shewanella loihica (strain ATCC BAA-1088 / PV-4)).